Consider the following 193-residue polypeptide: A-type ATP synthase subunit E (193 aa).

This sequence belongs to the V-ATPase E subunit family. In terms of assembly, has multiple subunits with at least A(3), B(3), C, D, E, F, H, I and proteolipid K(x).

It localises to the cell membrane. Its function is as follows. Component of the A-type ATP synthase that produces ATP from ADP in the presence of a proton gradient across the membrane. In Haloquadratum walsbyi (strain DSM 16790 / HBSQ001), this protein is A-type ATP synthase subunit E.